The chain runs to 662 residues: Protein Aster-C (662 aa).

The disordered stretch occupies residues 1–33 (MEGALTARQIVNEGDSSLATELQEEPEESPGPV). One can recognise a GRAM domain in the interval 70-176 (EYRQQFTHLP…LIIFRLWQNV (107 aa)). Residues 212-294 (VEENVQPRSP…EKRISRAPSK (83 aa)) are disordered. Residues 240–250 (VSFTQESVSRA) show a composition bias toward polar residues. A compositionally biased stretch (basic and acidic residues) spans 265 to 276 (LGKEDSQSERNV). The VASt domain maps to 326–497 (QGRLYINRVF…DLLMEESVLS (172 aa)). Positions 506–530 (HSSLRRRRRTLNRTAEPVPKLSSQR) are disordered. Over residues 507-516 (SSLRRRRRTL) the composition is skewed to basic residues. The chain crosses the membrane as a helical span at residues 557–577 (LIVVMSIFLLLLVLLNVTLFL).

As to expression, highly expressed in the liver. Also found in the testis.

It is found in the endoplasmic reticulum membrane. The protein localises to the cell membrane. Its function is as follows. Cholesterol transporter that mediates non-vesicular transport of cholesterol from the plasma membrane (PM) to the endoplasmic reticulum (ER). Contains unique domains for binding cholesterol and the PM, thereby serving as a molecular bridge for the transfer of cholesterol from the PM to the ER. Plays a crucial role in cholesterol homeostasis and has the unique ability to localize to the PM based on the level of membrane cholesterol. In lipid-poor conditions localizes to the ER membrane and in response to excess cholesterol in the PM is recruited to the endoplasmic reticulum-plasma membrane contact sites (EPCS) which is mediated by the GRAM domain. At the EPCS, the sterol-binding VASt/ASTER domain binds to the cholesterol in the PM and facilitates its transfer from the PM to ER. This is Protein Aster-C (Gramd1c) from Mus musculus (Mouse).